A 211-amino-acid chain; its full sequence is N-(5'-phosphoribosyl)anthranilate isomerase (211 aa).

It belongs to the TrpF family.

The catalysed reaction is N-(5-phospho-beta-D-ribosyl)anthranilate = 1-(2-carboxyphenylamino)-1-deoxy-D-ribulose 5-phosphate. It participates in amino-acid biosynthesis; L-tryptophan biosynthesis; L-tryptophan from chorismate: step 3/5. The chain is N-(5'-phosphoribosyl)anthranilate isomerase from Methanococcus maripaludis (strain DSM 14266 / JCM 13030 / NBRC 101832 / S2 / LL).